The following is a 263-amino-acid chain: LOB domain-containing protein 41 (263 aa).

In terms of domain architecture, LOB spans 3–109; sequence MSCNGCRVLR…VEAVMKGEPV (107 aa). Residues 162-204 form a disordered region; the sequence is TVAIQAESEGKSDEASHDSSLSHQSEIVAAHEGESKESESNVS. Basic and acidic residues-rich tracts occupy residues 169 to 178 and 190 to 200; these read SEGKSDEASH and AAHEGESKESE.

It belongs to the LOB domain-containing protein family. In terms of tissue distribution, expressed in young shoots, roots, stems, leaves and flowers.

In Arabidopsis thaliana (Mouse-ear cress), this protein is LOB domain-containing protein 41 (LBD41).